Reading from the N-terminus, the 441-residue chain is ATP-dependent RNA helicase RhlB (441 aa).

Positions 9-37 (QKFADFSLNKEIKTALNESGFEFCTPIQA) match the Q motif motif. The region spanning 40–219 (LPILLQKKDI…YDHMNEPEKV (180 aa)) is the Helicase ATP-binding domain. 53 to 60 (AQTGTGKT) contacts ATP. A DEAD box motif is present at residues 165-168 (DEAD). Residues 243–390 (KMRLLLSLIE…VTNYDSEGLL (148 aa)) enclose the Helicase C-terminal domain. The segment at 401–441 (RKHNNRPQQGRNNSGRPQGRNGNRAGGRNGPRRHDQVRRHS) is disordered.

Belongs to the DEAD box helicase family. RhlB subfamily. As to quaternary structure, component of the RNA degradosome, which is a multiprotein complex involved in RNA processing and mRNA degradation.

It localises to the cytoplasm. It catalyses the reaction ATP + H2O = ADP + phosphate + H(+). Its function is as follows. DEAD-box RNA helicase involved in RNA degradation. Has RNA-dependent ATPase activity and unwinds double-stranded RNA. In Shewanella woodyi (strain ATCC 51908 / MS32), this protein is ATP-dependent RNA helicase RhlB.